Here is a 180-residue protein sequence, read N- to C-terminus: Phosphoribosylaminoimidazole carboxylase (180 aa).

Residues S35, D38, S62, K65, G89, and S91 each contribute to the substrate site.

The protein belongs to the AIR carboxylase family. Class II subfamily.

It carries out the reaction 5-amino-1-(5-phospho-D-ribosyl)imidazole-4-carboxylate + H(+) = 5-amino-1-(5-phospho-beta-D-ribosyl)imidazole + CO2. It participates in purine metabolism; IMP biosynthesis via de novo pathway; 5-amino-1-(5-phospho-D-ribosyl)imidazole-4-carboxylate from 5-amino-1-(5-phospho-D-ribosyl)imidazole (carboxylase route): step 1/1. Catalyzes the reversible conversion of 5-aminoimidazole ribonucleotide (AIR) and CO(2) to 4-carboxy-5-aminoimidazole ribonucleotide (CAIR). The protein is Phosphoribosylaminoimidazole carboxylase of Archaeoglobus fulgidus (strain ATCC 49558 / DSM 4304 / JCM 9628 / NBRC 100126 / VC-16).